The following is a 117-amino-acid chain: Cell division protein FtsB (117 aa).

At 1 to 6 the chain is on the cytoplasmic side; sequence MRDWRW. A helical membrane pass occupies residues 7 to 24; the sequence is MLLVLALLLGWLQYRFWF. Topologically, residues 25–117 are periplasmic; that stretch reads GPGNSGEVMM…QVGEHPADVP (93 aa). Positions 29–69 form a coiled coil; it reads SGEVMMLEAQVTNQERDNEGLQQRNDALAAEVKDLKEGQSA.

This sequence belongs to the FtsB family. As to quaternary structure, part of a complex composed of FtsB, FtsL and FtsQ.

It is found in the cell inner membrane. Its function is as follows. Essential cell division protein. May link together the upstream cell division proteins, which are predominantly cytoplasmic, with the downstream cell division proteins, which are predominantly periplasmic. This Stenotrophomonas maltophilia (strain R551-3) protein is Cell division protein FtsB.